Reading from the N-terminus, the 310-residue chain is Glycine-rich RNA-binding protein RZ1C (310 aa).

The RRM domain occupies 7–85 (SRIFVGGLSP…RVISVNRAEP (79 aa)). S15 bears the Phosphoserine mark. The segment at 82 to 120 (RAEPKLGRDDGESHGSRGGRDSGYSIAGKGSFGGGGGGG) is disordered. The segment covering 83–101 (AEPKLGRDDGESHGSRGGR) has biased composition (basic and acidic residues). The segment covering 111–120 (GSFGGGGGGG) has biased composition (gly residues). The segment at 128 to 143 (CFKCGRVGHWARDCPS) adopts a CCHC-type zinc-finger fold. Residues 224-310 (RFAGGDRYSR…YPSSSTFDRY (87 aa)) form a disordered region. 2 stretches are compositionally biased toward basic and acidic residues: residues 226–236 (AGGDRYSRGSD) and 244–253 (DKARSFERDI). The segment covering 261 to 273 (RYGGGRAGGPIRG) has biased composition (gly residues). S295 bears the Phosphoserine mark.

Expressed in roots, rosette and cauline leaves, stems, floral buds and flowers.

It localises to the nucleus. Functionally, binds RNA and DNA sequences non-specifically. May be involved in tolerance to cold stress. The protein is Glycine-rich RNA-binding protein RZ1C of Arabidopsis thaliana (Mouse-ear cress).